The following is a 112-amino-acid chain: S-adenosylmethionine decarboxylase proenzyme (112 aa).

S62 serves as the catalytic Schiff-base intermediate with substrate; via pyruvic acid. Pyruvic acid (Ser); by autocatalysis is present on S62. H67 (proton acceptor; for processing activity) is an active-site residue. C82 (proton donor; for catalytic activity) is an active-site residue.

This sequence belongs to the prokaryotic AdoMetDC family. Type 1 subfamily. In terms of assembly, heterotetramer of two alpha and two beta chains arranged as a dimer of alpha/beta heterodimers. Pyruvate serves as cofactor. Post-translationally, is synthesized initially as an inactive proenzyme. Formation of the active enzyme involves a self-maturation process in which the active site pyruvoyl group is generated from an internal serine residue via an autocatalytic post-translational modification. Two non-identical subunits are generated from the proenzyme in this reaction, and the pyruvate is formed at the N-terminus of the alpha chain, which is derived from the carboxyl end of the proenzyme. The post-translation cleavage follows an unusual pathway, termed non-hydrolytic serinolysis, in which the side chain hydroxyl group of the serine supplies its oxygen atom to form the C-terminus of the beta chain, while the remainder of the serine residue undergoes an oxidative deamination to produce ammonia and the pyruvoyl group blocking the N-terminus of the alpha chain.

It catalyses the reaction S-adenosyl-L-methionine + H(+) = S-adenosyl 3-(methylsulfanyl)propylamine + CO2. The protein operates within amine and polyamine biosynthesis; S-adenosylmethioninamine biosynthesis; S-adenosylmethioninamine from S-adenosyl-L-methionine: step 1/1. Its function is as follows. Catalyzes the decarboxylation of S-adenosylmethionine to S-adenosylmethioninamine (dcAdoMet), the propylamine donor required for the synthesis of the polyamines spermine and spermidine from the diamine putrescine. This Archaeoglobus fulgidus (strain ATCC 49558 / DSM 4304 / JCM 9628 / NBRC 100126 / VC-16) protein is S-adenosylmethionine decarboxylase proenzyme.